Here is a 177-residue protein sequence, read N- to C-terminus: N5-carboxyaminoimidazole ribonucleotide mutase (177 aa).

Substrate contacts are provided by Ser18, Asp21, and Arg48.

Belongs to the AIR carboxylase family. Class I subfamily.

It carries out the reaction 5-carboxyamino-1-(5-phospho-D-ribosyl)imidazole + H(+) = 5-amino-1-(5-phospho-D-ribosyl)imidazole-4-carboxylate. Its pathway is purine metabolism; IMP biosynthesis via de novo pathway; 5-amino-1-(5-phospho-D-ribosyl)imidazole-4-carboxylate from 5-amino-1-(5-phospho-D-ribosyl)imidazole (N5-CAIR route): step 2/2. In terms of biological role, catalyzes the conversion of N5-carboxyaminoimidazole ribonucleotide (N5-CAIR) to 4-carboxy-5-aminoimidazole ribonucleotide (CAIR). This chain is N5-carboxyaminoimidazole ribonucleotide mutase, found in Pyrococcus horikoshii (strain ATCC 700860 / DSM 12428 / JCM 9974 / NBRC 100139 / OT-3).